Reading from the N-terminus, the 90-residue chain is Probable Fe(2+)-trafficking protein (90 aa).

This sequence belongs to the Fe(2+)-trafficking protein family.

Its function is as follows. Could be a mediator in iron transactions between iron acquisition and iron-requiring processes, such as synthesis and/or repair of Fe-S clusters in biosynthetic enzymes. The chain is Probable Fe(2+)-trafficking protein from Chromobacterium violaceum (strain ATCC 12472 / DSM 30191 / JCM 1249 / CCUG 213 / NBRC 12614 / NCIMB 9131 / NCTC 9757 / MK).